Here is a 269-residue protein sequence, read N- to C-terminus: 4-hydroxy-tetrahydrodipicolinate reductase (269 aa).

NAD(+)-binding positions include 8 to 13, E34, 98 to 100, and 122 to 125; these read GAAGRM, GTT, and APNY. Catalysis depends on H155, which acts as the Proton donor/acceptor. A (S)-2,3,4,5-tetrahydrodipicolinate-binding site is contributed by H156. The active-site Proton donor is K159. Residue 165-166 participates in (S)-2,3,4,5-tetrahydrodipicolinate binding; it reads GT.

It belongs to the DapB family.

Its subcellular location is the cytoplasm. It catalyses the reaction (S)-2,3,4,5-tetrahydrodipicolinate + NAD(+) + H2O = (2S,4S)-4-hydroxy-2,3,4,5-tetrahydrodipicolinate + NADH + H(+). The enzyme catalyses (S)-2,3,4,5-tetrahydrodipicolinate + NADP(+) + H2O = (2S,4S)-4-hydroxy-2,3,4,5-tetrahydrodipicolinate + NADPH + H(+). It participates in amino-acid biosynthesis; L-lysine biosynthesis via DAP pathway; (S)-tetrahydrodipicolinate from L-aspartate: step 4/4. Functionally, catalyzes the conversion of 4-hydroxy-tetrahydrodipicolinate (HTPA) to tetrahydrodipicolinate. This is 4-hydroxy-tetrahydrodipicolinate reductase from Aliivibrio salmonicida (strain LFI1238) (Vibrio salmonicida (strain LFI1238)).